Reading from the N-terminus, the 109-residue chain is Putative double-stranded DNA mimic protein CKO_01325 (109 aa).

The protein belongs to the putative dsDNA mimic protein family.

Functionally, may act as a double-stranded DNA (dsDNA) mimic. Probably regulates the activity of a dsDNA-binding protein. The polypeptide is Putative double-stranded DNA mimic protein CKO_01325 (Citrobacter koseri (strain ATCC BAA-895 / CDC 4225-83 / SGSC4696)).